The sequence spans 572 residues: Moesin/ezrin/radixin homolog 1 (572 aa).

One can recognise an FERM domain in the interval 1–291 (MNVRVTTMDA…GNHELYMRRR (291 aa)). A disordered region spans residues 456 to 491 (TTTPSHHHVEEEEEMDNEEELVNGENGNQDFSKDFD). Positions 466 to 477 (EEEEMDNEEELV) are enriched in acidic residues. Residue T553 is modified to Phosphothreonine.

In terms of assembly, interacts with cytoskeletal actin.

It localises to the cell junction. Its subcellular location is the adherens junction. The protein localises to the cell projection. The protein resides in the microvillus. It is found in the rhabdomere. It localises to the cell membrane. Its subcellular location is the cytoplasm. The protein localises to the cytoskeleton. In terms of biological role, involved in connections of major cytoskeletal structures to the plasma membrane. The polypeptide is Moesin/ezrin/radixin homolog 1 (Culex quinquefasciatus (Southern house mosquito)).